Reading from the N-terminus, the 206-residue chain is Thymidylate kinase (206 aa).

11–18 (GIDGAGKT) serves as a coordination point for ATP.

This sequence belongs to the thymidylate kinase family.

The enzyme catalyses dTMP + ATP = dTDP + ADP. Its function is as follows. Phosphorylation of dTMP to form dTDP in both de novo and salvage pathways of dTTP synthesis. The protein is Thymidylate kinase of Burkholderia cenocepacia (strain ATCC BAA-245 / DSM 16553 / LMG 16656 / NCTC 13227 / J2315 / CF5610) (Burkholderia cepacia (strain J2315)).